Reading from the N-terminus, the 354-residue chain is 3-dehydroquinate synthase (354 aa).

NAD(+) is bound by residues 61–66 (DGESTK), 119–120 (TT), Lys-132, Lys-141, and 159–162 (FLET). Zn(2+)-binding residues include Glu-174, His-238, and His-254.

This sequence belongs to the sugar phosphate cyclases superfamily. Dehydroquinate synthase family. The cofactor is NAD(+). Co(2+) is required as a cofactor. Requires Zn(2+) as cofactor.

It localises to the cytoplasm. The catalysed reaction is 7-phospho-2-dehydro-3-deoxy-D-arabino-heptonate = 3-dehydroquinate + phosphate. It participates in metabolic intermediate biosynthesis; chorismate biosynthesis; chorismate from D-erythrose 4-phosphate and phosphoenolpyruvate: step 2/7. Functionally, catalyzes the conversion of 3-deoxy-D-arabino-heptulosonate 7-phosphate (DAHP) to dehydroquinate (DHQ). This chain is 3-dehydroquinate synthase, found in Saccharolobus solfataricus (strain ATCC 35092 / DSM 1617 / JCM 11322 / P2) (Sulfolobus solfataricus).